The primary structure comprises 863 residues: MIKGVVNKIFGTKNDREIKRYQKRVAKINALEPKYEKLTDEELKKAFNELRQKVKSGQMSMDEALEDSFAITREASKRVLGMRHYDVQLIGGMVLHEGKIAEMKTGEGKTLVATLAVALNAMTDEGVHVVTVNDYLAKRDATEMGKLYEFLGYSTGCITSEIQDDQERKKQYQCDITYGTNNEFGFDYLRDNMKYSLDEIVQRGHNFAIVDEVDSILIDEARTPLIISGPTNRKLDNYVKADQIAKQLEKDKHFTVDEKDRVILLTQEGIAKAEELFGVENLYSLENAILAHHLDQALKANYLFQKDVDYVVRDGEVIIVDEFTGRLSEGRRFSEGLHQALEAKEGVPIQEESQTLADITFQNYFRLYKKLAGMTGTAQTEATEFSEIYGLEVISIPTNRPVIRKDLDDLIFKTEKEKFDAVVKKIKELHQKGQPVLVGTTSIEKNELLHKLLKKEKIPHAVLNAKHHEKEAEIIAQAGRKGAVTVATNMAGRGVDIKIDDEVRELGGLFILGTERHESRRIDNQLRGRAGRQGDPGASQFFLSLEDNLLRIFGGDRIKNIMNRLGIEEGEHIESKMVTRAVEKAQKRVENMHFESRKHILEYDDVANEQRKTIYKFRQELLNPEYDIASKIRENRAEVVEELLSQSEIFPETPKDDFNLEKLSKVIQEELGTKIGVEEMKDKEYDELKNFLIERLEKEYEEKMGQLEEEQRREIERILYLQVLDNAWREHLYQMDILKTGIGLRGYNQKDPLVEYKKESFNLFMELVNRIKKEAIKTLHLIELRNEQEEEEIRRLEEELAKMEAQIAQEAVMQHGEEVKTEPVITKKKPARNEPCPCGSGKKYKHCCGKSGPKKGILAAANG.

Residues Q88, 106–110 (GEGKT), and D496 contribute to the ATP site. The tract at residues 818 to 842 (EVKTEPVITKKKPARNEPCPCGSGK) is disordered. Zn(2+) is bound by residues C836, C838, C847, and C848.

It belongs to the SecA family. As to quaternary structure, monomer and homodimer. Part of the essential Sec protein translocation apparatus which comprises SecA, SecYEG and auxiliary proteins SecDF-YajC and YidC. Zn(2+) is required as a cofactor.

Its subcellular location is the cell inner membrane. The protein resides in the cytoplasm. The enzyme catalyses ATP + H2O + cellular proteinSide 1 = ADP + phosphate + cellular proteinSide 2.. Functionally, part of the Sec protein translocase complex. Interacts with the SecYEG preprotein conducting channel. Has a central role in coupling the hydrolysis of ATP to the transfer of proteins into and across the cell membrane, serving as an ATP-driven molecular motor driving the stepwise translocation of polypeptide chains across the membrane. This is Protein translocase subunit SecA from Nitratiruptor sp. (strain SB155-2).